The primary structure comprises 327 residues: Vacuolar protein sorting-associated protein 26A (327 aa).

The interval 306 to 327 (RTNFHQRFESPESQASAEQPEM) is disordered. Phosphoserine is present on Ser-315. The segment covering 316-327 (PESQASAEQPEM) has biased composition (polar residues).

The protein belongs to the VPS26 family. In terms of assembly, component of the heterotrimeric retromer cargo-selective complex (CSC), also described as vacuolar protein sorting subcomplex (VPS), formed by VPS26 (VPS26A or VPS26B), VPS29 and VPS35. The CSC has a highly elongated structure with VPS26 and VPS29 binding independently at opposite distal ends of VPS35 as central platform. The CSC is believed to associate with variable sorting nexins to form functionally distinct retromer complex variants. The originally described retromer complex (also called SNX-BAR retromer) is a pentamer containing the CSC and a heterodimeric membrane-deforming subcomplex formed between SNX1 or SNX2 and SNX5 or SNX6 (also called SNX-BAR subcomplex); the respective CSC and SNX-BAR subcomplexes associate with low affinity. The CSC associates with SNX3 to form a SNX3-retromer complex. The CSC associates with SNX27, the WASH complex and the SNX-BAR subcomplex to form the SNX27-retromer complex. Interacts with VPS29, VPS35, SNX27, SNX1, SNX2, SNX5, SNX6, SNX3, RAB7A, ECPAS, EHD1, WASHC5, SORL1.

It is found in the cytoplasm. Its subcellular location is the endosome membrane. The protein localises to the early endosome. Its function is as follows. Acts as a component of the retromer cargo-selective complex (CSC). The CSC is believed to be the core functional component of retromer or respective retromer complex variants acting to prevent missorting of selected transmembrane cargo proteins into the lysosomal degradation pathway. The recruitment of the CSC to the endosomal membrane involves RAB7A and SNX3. The SNX-BAR retromer mediates retrograde transport of cargo proteins from endosomes to the trans-Golgi network (TGN) and is involved in endosome-to-plasma membrane transport for cargo protein recycling. The SNX3-retromer mediates the retrograde endosome-to-TGN transport of WLS distinct from the SNX-BAR retromer pathway. The SNX27-retromer is believed to be involved in endosome-to-plasma membrane trafficking and recycling of a broad spectrum of cargo proteins. The CSC complex seems to act as recruitment hub for other proteins, such as the WASH complex and TBC1D5. Required for retrograde transport of lysosomal enzyme receptor IGF2R. Required to regulate transcytosis of the polymeric immunoglobulin receptor (pIgR-pIgA). Required for the endosomal localization of WASHC2 (indicative for the WASH complex). Required for the endosomal localization of TBC1D5. Mediates retromer cargo recognition of SORL1 and is involved in trafficking of SORL1 implicated in sorting and processing of APP. Involved in retromer-independent lysosomal sorting of F2R. Involved in recycling of ADRB2. Acts redundantly with VSP26B in SNX-27 mediated endocytic recycling of SLC2A1/GLUT1. Enhances the affinity of SNX27 for PDZ-binding motifs in cargo proteins. The chain is Vacuolar protein sorting-associated protein 26A (Vps26a) from Rattus norvegicus (Rat).